We begin with the raw amino-acid sequence, 297 residues long: N-acetylmuramic acid 6-phosphate etherase (297 aa).

Residues 56 to 219 (AIEAFNKGGR…STISMIGIGK (164 aa)) enclose the SIS domain. Glu-84 functions as the Proton donor in the catalytic mechanism. Glu-115 is an active-site residue.

It belongs to the GCKR-like family. MurNAc-6-P etherase subfamily. As to quaternary structure, homodimer.

The catalysed reaction is N-acetyl-D-muramate 6-phosphate + H2O = N-acetyl-D-glucosamine 6-phosphate + (R)-lactate. It participates in amino-sugar metabolism; N-acetylmuramate degradation. Functionally, specifically catalyzes the cleavage of the D-lactyl ether substituent of MurNAc 6-phosphate, producing GlcNAc 6-phosphate and D-lactate. This Lactococcus lactis subsp. cremoris (strain MG1363) protein is N-acetylmuramic acid 6-phosphate etherase.